The chain runs to 283 residues: Glutamate racemase (283 aa).

Residues 28–29 (DS) and 60–61 (YG) each bind substrate. Cys92 (proton donor/acceptor) is an active-site residue. Substrate is bound at residue 93–94 (NT). Residue Cys204 is the Proton donor/acceptor of the active site. 205-206 (TH) contacts substrate.

It belongs to the aspartate/glutamate racemases family.

It catalyses the reaction L-glutamate = D-glutamate. It functions in the pathway cell wall biogenesis; peptidoglycan biosynthesis. Provides the (R)-glutamate required for cell wall biosynthesis. This chain is Glutamate racemase, found in Klebsiella pneumoniae (strain 342).